Consider the following 430-residue polypeptide: MSLGQRLALLAIRLQEPQRVASFQRLCGVEVPLGSPKAGEDAETEVRGAPGDPRRRPRQSGADGSPAKPDCCGAPNGVRNGLAAEPGPTGPRRAGSLRRNSLTGEEGELAKVSNLPLYYLFCFGTELGNELFYIIFFPFWIWNLDPFVGRRLVIIWVLVMYLGQCTKDIIRWPRPASPPVIKLEIFYNSEYSMPSTHAMSGTAIPIAMILLTYGRWQYPLIYGLILIPCWSSLVCLSRIYMGMHSILDVIAGFLYTILILIIFYPLVDLIDNFNQTYKYAPLIIIGLHLILGIFSFTLDTWSTSRGDTAEILGSGAGIACGSHAAYNLGISLDPSLHTLPLAIPPLTVTLFGKAILRVVIGMLLVLFVRDIMKKVTIPLACKLFGIPCHDLRQARQHMEVELPYRYITYGTVGFSITFLIPYIFSFIGIS.

Residues 34-100 (GSPKAGEDAE…PRRAGSLRRN (67 aa)) are disordered. The residue at position 101 (Ser-101) is a Phosphoserine. The residue at position 103 (Thr-103) is a Phosphothreonine. A run of 4 helical transmembrane segments spans residues 121–141 (FCFGTELGNELFYIIFFPFWI), 152–172 (LVIIWVLVMYLGQCTKDIIRW), 193–213 (MPSTHAMSGTAIPIAMILLTY), and 216–236 (WQYPLIYGLILIPCWSSLVCL). The interval 167-175 (KDIIRWPRP) is phosphatase sequence motif I. The segment at 194 to 197 (PSTH) is phosphatase sequence motif II. The active-site Proton donor is the His-197. Positions 237–248 (SRIYMGMHSILD) are phosphatase sequence motif III. The active-site Nucleophile is the His-244. The next 5 membrane-spanning stretches (helical) occupy residues 246–266 (ILDVIAGFLYTILILIIFYPL), 279–299 (YAPLIIIGLHLILGIFSFTLD), 311–331 (ILGSGAGIACGSHAAYNLGIS), 348–368 (VTLFGKAILRVVIGMLLVLFV), and 409–429 (YGTVGFSITFLIPYIFSFIGI).

The protein belongs to the type 2 lipid phosphate phosphatase family.

Its subcellular location is the endoplasmic reticulum membrane. It localises to the cell membrane. The enzyme catalyses sphinganine 1-phosphate + H2O = sphinganine + phosphate. It catalyses the reaction sphing-4-enine 1-phosphate + H2O = sphing-4-enine + phosphate. Functionally, specifically dephosphorylates sphingosine 1-phosphate (S1P), dihydro-S1P, and phyto-S1P. Does not act on ceramide 1-phosphate, lysophosphatidic acid or phosphatidic acid. Sphingosine-1-phosphate phosphatase activity is needed for efficient recycling of sphingosine into the sphingolipid synthesis pathway. Regulates the intracellular levels of the bioactive sphingolipid metabolite S1P that regulates diverse biological processes acting both as an extracellular receptor ligand or as an intracellular second messenger. Involved in efficient ceramide synthesis from exogenous sphingoid bases. Converts S1P to sphingosine, which is readily metabolized to ceramide via ceramide synthase. In concert with sphingosine kinase 2 (SphK2), recycles sphingosine into ceramide through a phosphorylation/dephosphorylation cycle. Regulates endoplasmic-to-Golgi trafficking of ceramides, resulting in the regulation of ceramide levels in the endoplasmic reticulum, preferentially long-chain ceramide species, and influences the anterograde membrane transport of both ceramide and proteins from the endoplasmic reticulum to the Golgi apparatus. The modulation of intracellular ceramide levels in turn regulates apoptosis. Via S1P levels, modulates resting tone, intracellular Ca(2+) and myogenic vasoconstriction in resistance arteries. Also involved in unfolded protein response (UPR) and ER stress-induced autophagy via regulation of intracellular S1P levels. Involved in the regulation of epidermal homeostasis and keratinocyte differentiation. In Rattus norvegicus (Rat), this protein is Sphingosine-1-phosphate phosphatase 1.